The sequence spans 253 residues: Imidazole glycerol phosphate synthase subunit HisF (253 aa).

Active-site residues include aspartate 11 and aspartate 130.

It belongs to the HisA/HisF family. Heterodimer of HisH and HisF.

Its subcellular location is the cytoplasm. The catalysed reaction is 5-[(5-phospho-1-deoxy-D-ribulos-1-ylimino)methylamino]-1-(5-phospho-beta-D-ribosyl)imidazole-4-carboxamide + L-glutamine = D-erythro-1-(imidazol-4-yl)glycerol 3-phosphate + 5-amino-1-(5-phospho-beta-D-ribosyl)imidazole-4-carboxamide + L-glutamate + H(+). The protein operates within amino-acid biosynthesis; L-histidine biosynthesis; L-histidine from 5-phospho-alpha-D-ribose 1-diphosphate: step 5/9. In terms of biological role, IGPS catalyzes the conversion of PRFAR and glutamine to IGP, AICAR and glutamate. The HisF subunit catalyzes the cyclization activity that produces IGP and AICAR from PRFAR using the ammonia provided by the HisH subunit. The protein is Imidazole glycerol phosphate synthase subunit HisF of Methylibium petroleiphilum (strain ATCC BAA-1232 / LMG 22953 / PM1).